Here is a 241-residue protein sequence, read N- to C-terminus: MLVLFVATWSDLGLCKKRPKPGGWNTGGSRYPGQGSPGGNRYPPQGGGGWGQPHGGGWGQPHGGGWGQPHGGGWGQPHGGGWGQGGGTHNQWHKPNKPKTSMKHMAGAAAAGAVVGGLGGYMLGSAMSRPLIHFGNDYEDRYYRENMYRYPNQVYYRPVDQYSNQNNFVHDCVNITIKQHTVTTTTKGENFTETDVKMMERVVEQMCITQYEKESQAYYQRGSSMVLFSSPPVILLISFLI.

Positions 1–15 are cleaved as a signal peptide; sequence MLVLFVATWSDLGLC. Residues 16 to 31 form an interaction with ADGRG6 region; that stretch reads KKRPKPGGWNTGGSRY. The segment at 16-223 is interaction with GRB2, ERI3 and SYN1; it reads KKRPKPGGWN…ESQAYYQRGS (208 aa). Positions 18–101 are disordered; that stretch reads RPKPGGWNTG…WHKPNKPKTS (84 aa). Tandem repeats lie at residues 44 to 52, 53 to 60, 61 to 68, 69 to 76, and 77 to 84. A 5 X 8 AA tandem repeats of P-H-G-G-G-W-G-Q region spans residues 44 to 84; the sequence is PQGGGGWGQPHGGGWGQPHGGGWGQPHGGGWGQPHGGGWGQ. Residues 45 to 88 show a composition bias toward gly residues; it reads QGGGGWGQPHGGGWGQPHGGGWGQPHGGGWGQPHGGGWGQGGGT. The Cu(2+) site is built by His54, Gly55, Gly56, His62, Gly63, Gly64, His70, Gly71, Gly72, His78, Gly79, and Gly80. Over residues 91 to 101 the composition is skewed to basic residues; it reads QWHKPNKPKTS. Cys172 and Cys207 are oxidised to a cystine. Residues Asn174 and Asn190 are each glycosylated (N-linked (GlcNAc...) asparagine). A lipid anchor (GPI-anchor amidated serine) is attached at Ser223. A propeptide spans 224 to 241 (removed in mature form); sequence SMVLFSSPPVILLISFLI.

It belongs to the prion family. As to quaternary structure, monomer and homodimer. Has a tendency to aggregate into amyloid fibrils containing a cross-beta spine, formed by a steric zipper of superposed beta-strands. Soluble oligomers may represent an intermediate stage on the path to fibril formation. Copper binding may promote oligomerization. Interacts with GRB2, APP, ERI3/PRNPIP and SYN1. Mislocalized cytosolically exposed PrP interacts with MGRN1; this interaction alters MGRN1 subcellular location and causes lysosomal enlargement. Interacts with APP. Interacts with KIAA1191. Interacts with ADGRG6.

It is found in the cell membrane. It localises to the golgi apparatus. Its primary physiological function is unclear. May play a role in neuronal development and synaptic plasticity. May be required for neuronal myelin sheath maintenance. May promote myelin homeostasis through acting as an agonist for ADGRG6 receptor. May play a role in iron uptake and iron homeostasis. Soluble oligomers are toxic to cultured neuroblastoma cells and induce apoptosis (in vitro). Association with GPC1 (via its heparan sulfate chains) targets PRNP to lipid rafts. Also provides Cu(2+) or Zn(2+) for the ascorbate-mediated GPC1 deaminase degradation of its heparan sulfate side chains. This Mandrillus sphinx (Mandrill) protein is Major prion protein (PRNP).